The chain runs to 267 residues: Aliphatic sulfonates import ATP-binding protein SsuB 1 (267 aa).

The 215-residue stretch at 35–249 folds into the ABC transporter domain; sequence VRVRGLRRVF…RRADPAFDRL (215 aa). 67–74 contacts ATP; it reads GRSGSGKS.

This sequence belongs to the ABC transporter superfamily. Aliphatic sulfonates importer (TC 3.A.1.17.2) family. In terms of assembly, the complex is composed of two ATP-binding proteins (SsuB), two transmembrane proteins (SsuC) and a solute-binding protein (SsuA).

The protein localises to the cell membrane. The catalysed reaction is ATP + H2O + aliphatic sulfonate-[sulfonate-binding protein]Side 1 = ADP + phosphate + aliphatic sulfonateSide 2 + [sulfonate-binding protein]Side 1.. Functionally, part of the ABC transporter complex SsuABC involved in aliphatic sulfonates import. Responsible for energy coupling to the transport system. The sequence is that of Aliphatic sulfonates import ATP-binding protein SsuB 1 from Frankia alni (strain DSM 45986 / CECT 9034 / ACN14a).